The following is a 119-amino-acid chain: DIEAQRVLRKDIAECARTLPKCVNQPDDPLARVDVWHCAMSKRGVYDNPDPAVVKEKNSKMCPKIITDPADVENCKKVVSRCVDRETQRPRSNRQKAINITGCILRAGVVEATVLAREK.

This sequence belongs to the ant venom allergen 2/4 family. As to quaternary structure, homodimer; disulfide-linked. As to expression, expressed by the venom gland.

Its subcellular location is the secreted. In Solenopsis richteri (Black imported fire ant), this protein is Venom allergen 2.